A 305-amino-acid polypeptide reads, in one-letter code: Homoserine kinase (305 aa).

ATP is bound at residue 93 to 103 (PLARGLGSSAT).

It belongs to the GHMP kinase family. Homoserine kinase subfamily.

It localises to the cytoplasm. It catalyses the reaction L-homoserine + ATP = O-phospho-L-homoserine + ADP + H(+). It functions in the pathway amino-acid biosynthesis; L-threonine biosynthesis; L-threonine from L-aspartate: step 4/5. Functionally, catalyzes the ATP-dependent phosphorylation of L-homoserine to L-homoserine phosphate. The chain is Homoserine kinase from Trichodesmium erythraeum (strain IMS101).